The primary structure comprises 139 residues: Ribonuclease P protein component (139 aa).

Residues 120 to 139 form a disordered region; that stretch reads KPTTGVEYSPKNEKCESVLP. Basic and acidic residues predominate over residues 129-139; the sequence is PKNEKCESVLP.

Belongs to the RnpA family. Consists of a catalytic RNA component (M1 or rnpB) and a protein subunit.

It catalyses the reaction Endonucleolytic cleavage of RNA, removing 5'-extranucleotides from tRNA precursor.. Functionally, RNaseP catalyzes the removal of the 5'-leader sequence from pre-tRNA to produce the mature 5'-terminus. It can also cleave other RNA substrates such as 4.5S RNA. The protein component plays an auxiliary but essential role in vivo by binding to the 5'-leader sequence and broadening the substrate specificity of the ribozyme. The polypeptide is Ribonuclease P protein component (Chlamydia caviae (strain ATCC VR-813 / DSM 19441 / 03DC25 / GPIC) (Chlamydophila caviae)).